The sequence spans 366 residues: Cyclin-O protein A (366 aa).

Disordered regions lie at residues 18–55 (AAFSSGKRKRDSGYSPGDATPGDRGEGGPDWPSAGIKK) and 80–99 (YETPSPSPVAPTPTNEPYDS).

The protein belongs to the cyclin family.

The protein resides in the cytoplasm. Its function is as follows. Specifically required for generation of multiciliated cells, possibly by promoting a cell cycle state compatible with centriole amplification and maturation. Acts downstream of mcidas to promote mother centriole amplification and maturation in preparation for apical docking. This chain is Cyclin-O protein A (ccno-a), found in Xenopus laevis (African clawed frog).